An 84-amino-acid chain; its full sequence is Small ribosomal subunit protein bS16 (84 aa).

It belongs to the bacterial ribosomal protein bS16 family.

The polypeptide is Small ribosomal subunit protein bS16 (Burkholderia ambifaria (strain MC40-6)).